A 106-amino-acid polypeptide reads, in one-letter code: Large ribosomal subunit protein uL24 (106 aa).

Belongs to the universal ribosomal protein uL24 family. In terms of assembly, part of the 50S ribosomal subunit.

Its function is as follows. One of two assembly initiator proteins, it binds directly to the 5'-end of the 23S rRNA, where it nucleates assembly of the 50S subunit. Functionally, one of the proteins that surrounds the polypeptide exit tunnel on the outside of the subunit. The polypeptide is Large ribosomal subunit protein uL24 (Porphyromonas gingivalis (strain ATCC 33277 / DSM 20709 / CIP 103683 / JCM 12257 / NCTC 11834 / 2561)).